The chain runs to 263 residues: Phosphate import ATP-binding protein PstB (263 aa).

The ABC transporter domain occupies 16–258 (VTARNVTVSY…PRDTRTQDYI (243 aa)). 48-55 (GPSGCGKS) serves as a coordination point for ATP.

This sequence belongs to the ABC transporter superfamily. Phosphate importer (TC 3.A.1.7) family. In terms of assembly, the complex is composed of two ATP-binding proteins (PstB), two transmembrane proteins (PstC and PstA) and a solute-binding protein (PstS).

The protein resides in the cell inner membrane. It catalyses the reaction phosphate(out) + ATP + H2O = ADP + 2 phosphate(in) + H(+). Its function is as follows. Part of the ABC transporter complex PstSACB involved in phosphate import. Responsible for energy coupling to the transport system. The sequence is that of Phosphate import ATP-binding protein PstB from Maricaulis maris (strain MCS10) (Caulobacter maris).